Reading from the N-terminus, the 85-residue chain is U4-theraphotoxin-Hhn1a (85 aa).

The signal sequence occupies residues M1–A22. Positions E23–R48 are excised as a propeptide. 3 disulfide bridges follow: C52–C66, C56–C77, and C71–C82.

It belongs to the neurotoxin 12 (Hwtx-2) family. 02 (Hwtx-2) subfamily. In terms of assembly, monomer. Expressed by the venom gland.

The protein localises to the secreted. Its function is as follows. Neurotoxin active on both insects and mammals. In Cyriopagopus hainanus (Chinese bird spider), this protein is U4-theraphotoxin-Hhn1a.